Consider the following 150-residue polypeptide: Endoribonuclease YbeY (150 aa).

Zn(2+) is bound by residues H102, H106, and H112.

This sequence belongs to the endoribonuclease YbeY family. Zn(2+) is required as a cofactor.

Its subcellular location is the cytoplasm. Its function is as follows. Single strand-specific metallo-endoribonuclease involved in late-stage 70S ribosome quality control and in maturation of the 3' terminus of the 16S rRNA. The protein is Endoribonuclease YbeY of Thermotoga petrophila (strain ATCC BAA-488 / DSM 13995 / JCM 10881 / RKU-1).